A 484-amino-acid chain; its full sequence is Chromosomal replication initiator protein DnaA (484 aa).

Residues 1-73 form a domain I, interacts with DnaA modulators region; the sequence is MQEGKNIWSL…EILIEKGHST (73 aa). The tract at residues 73–140 is domain II; that stretch reads TINVEFIHSQ…EEIHIKYRNP (68 aa). Positions 141-357 are domain III, AAA+ region; it reads FLKKKYTFEN…AAVTKLKAHI (217 aa). 4 residues coordinate ATP: Gly-185, Gly-187, Lys-188, and Thr-189. The segment at 358 to 484 is domain IV, binds dsDNA; it reads DLEDIEIDTN…IELMNKINKN (127 aa).

Belongs to the DnaA family. Oligomerizes as a right-handed, spiral filament on DNA at oriC.

It is found in the cytoplasm. Functionally, plays an essential role in the initiation and regulation of chromosomal replication. ATP-DnaA binds to the origin of replication (oriC) to initiate formation of the DNA replication initiation complex once per cell cycle. Binds the DnaA box (a 9 base pair repeat at the origin) and separates the double-stranded (ds)DNA. Forms a right-handed helical filament on oriC DNA; dsDNA binds to the exterior of the filament while single-stranded (ss)DNA is stabiized in the filament's interior. The ATP-DnaA-oriC complex binds and stabilizes one strand of the AT-rich DNA unwinding element (DUE), permitting loading of DNA polymerase. After initiation quickly degrades to an ADP-DnaA complex that is not apt for DNA replication. Binds acidic phospholipids. The chain is Chromosomal replication initiator protein DnaA from Borrelia duttonii (strain Ly).